The following is a 127-amino-acid chain: Protein translocase subunit SecE (127 aa).

3 helical membrane-spanning segments follow: residues 16–36 (AMKW…NYLY), 41–61 (LPLR…VALL), and 96–116 (IVAA…GILV).

Belongs to the SecE/SEC61-gamma family. In terms of assembly, component of the Sec protein translocase complex. Heterotrimer consisting of SecY, SecE and SecG subunits. The heterotrimers can form oligomers, although 1 heterotrimer is thought to be able to translocate proteins. Interacts with the ribosome. Interacts with SecDF, and other proteins may be involved. Interacts with SecA.

The protein resides in the cell inner membrane. Functionally, essential subunit of the Sec protein translocation channel SecYEG. Clamps together the 2 halves of SecY. May contact the channel plug during translocation. The protein is Protein translocase subunit SecE of Salmonella typhi.